A 275-amino-acid polypeptide reads, in one-letter code: Large ribosomal subunit protein uL2 (275 aa).

Residues Glu236 to Ala263 form a disordered region.

It belongs to the universal ribosomal protein uL2 family. In terms of assembly, part of the 50S ribosomal subunit. Forms a bridge to the 30S subunit in the 70S ribosome.

One of the primary rRNA binding proteins. Required for association of the 30S and 50S subunits to form the 70S ribosome, for tRNA binding and peptide bond formation. It has been suggested to have peptidyltransferase activity; this is somewhat controversial. Makes several contacts with the 16S rRNA in the 70S ribosome. The chain is Large ribosomal subunit protein uL2 from Pseudothermotoga lettingae (strain ATCC BAA-301 / DSM 14385 / NBRC 107922 / TMO) (Thermotoga lettingae).